We begin with the raw amino-acid sequence, 279 residues long: Protein PHOTOPERIODIC CONTROL OF HYPOCOTYL 1-LIKE (279 aa).

Interacts with light-activated phyB. Binds directly to PIF1 and COP1. Ubiquitinated by COP1 in darkness; this leads to proteasomal degradation. In terms of tissue distribution, mainly expressed in cotyledons, hypocotyls, leaves.

It localises to the nucleus. Its function is as follows. Together with PCH1, regulates growth and development adaptation to the ambient environment by controlling negatively phytochrome B (phyB) dark reversion, a temperature-dependent thermal relaxation process during which phyB reverts from the active to the inactive state. Contributes to red (R) light-triggered photomorphogenesis. Promotes various light responses such as seed germination, hypocotyl gravitropism and chlorophyll biosynthesis, via direct interaction with PIF1 and COP1. Prevents DNA-binding ability of PIF1 to negatively regulate the expressions of its target genes. Facilitates the physical interaction between phyB and PIF1 and the subsequent light-induced degradation of PIF1. This Arabidopsis thaliana (Mouse-ear cress) protein is Protein PHOTOPERIODIC CONTROL OF HYPOCOTYL 1-LIKE.